Here is a 222-residue protein sequence, read N- to C-terminus: Phosphoglycolate phosphatase (222 aa).

The Nucleophile role is filled by D12. Mg(2+) is bound by residues D12, D14, and D175.

The protein belongs to the HAD-like hydrolase superfamily. CbbY/CbbZ/Gph/YieH family. The cofactor is Mg(2+).

The enzyme catalyses 2-phosphoglycolate + H2O = glycolate + phosphate. The protein operates within organic acid metabolism; glycolate biosynthesis; glycolate from 2-phosphoglycolate: step 1/1. In terms of biological role, specifically catalyzes the dephosphorylation of 2-phosphoglycolate. Is involved in the dissimilation of the intracellular 2-phosphoglycolate formed during the DNA repair of 3'-phosphoglycolate ends, a major class of DNA lesions induced by oxidative stress. This is Phosphoglycolate phosphatase from Chromobacterium violaceum (strain ATCC 12472 / DSM 30191 / JCM 1249 / CCUG 213 / NBRC 12614 / NCIMB 9131 / NCTC 9757 / MK).